The following is a 405-amino-acid chain: Terpene cyclase pbrA (405 aa).

Aspartate 103, glutamate 168, asparagine 229, serine 233, glutamate 237, and aspartate 241 together coordinate Mg(2+). The short motif at 103–108 (DDEISS) is the D(D/E)XX(D/E) motif element. Positions 227-237 (LVNDLFSFYKE) match the NSE motif motif. Residues 316–323 (EDLGGSSA) carry the WxxxxxRY motif motif.

It belongs to the trichodiene synthase family. The cofactor is Mg(2+).

The protein operates within secondary metabolite biosynthesis; terpenoid biosynthesis. Terpene cyclase; part of the gene cluster that mediates the biosynthesis of the sesquiterpenoid aspterric acid (AA), an inhibitor of dihydroxy-acid dehydratase (DHAD) effective as an herbicide. PbrA cyclizes farnesyl diphosphate (FPP) to produce (-)-daucane. The cytochrome P450 monooxygenase pbrBB then converts (-)-daucane into the alpha-epoxy carboxylate intermediate which is further converted into the tricyclic aspterric acid by the cytochrome P450 monooxygenase pbrC. The sequence is that of Terpene cyclase pbrA from Penicillium brasilianum.